The sequence spans 561 residues: Zinc finger protein 394 (561 aa).

Position 12 is a phosphoserine (Ser12). Residue Lys40 forms a Glycyl lysine isopeptide (Lys-Gly) (interchain with G-Cter in SUMO2) linkage. The segment at 43 to 62 is disordered; sequence EDSLGSWEPSYPAASPDPET. An SCAN box domain is found at 64 to 146; that stretch reads RLHFRQLRYQ…AVVRALQRAL (83 aa). Residues 155 to 230 form the KRAB domain; the sequence is VTFEDMAVSL…LQEAFQGKRP (76 aa). Glycyl lysine isopeptide (Lys-Gly) (interchain with G-Cter in SUMO2) cross-links involve residues Lys203 and Lys228. The span at 238–247 shows a compositional bias: basic and acidic residues; the sequence is THEDRVEKQS. The tract at residues 238-283 is disordered; sequence THEDRVEKQSGDPLPLKLENSPEAEGFNSISDVNKNGSIEGEDSKN. Residue Lys254 forms a Glycyl lysine isopeptide (Lys-Gly) (interchain with G-Cter in SUMO2) linkage. The segment covering 265-274 has biased composition (polar residues); that stretch reads NSISDVNKNG. Residue Lys282 forms a Glycyl lysine isopeptide (Lys-Gly) (interchain with G-Cter in SUMO2) linkage. 7 C2H2-type zinc fingers span residues 358 to 380, 386 to 408, 414 to 436, 442 to 463, 469 to 491, 497 to 519, and 525 to 547; these read YKCG…QRIH, YGCQ…QRTH, YTCL…QSTH, FKCE…QRLH, YKCE…HRIH, YGCS…QRIH, and YKCL…QRIH. Lys443 participates in a covalent cross-link: Glycyl lysine isopeptide (Lys-Gly) (interchain with G-Cter in SUMO2).

This sequence belongs to the krueppel C2H2-type zinc-finger protein family.

It is found in the nucleus. In terms of biological role, may be involved in transcriptional regulation. This chain is Zinc finger protein 394 (ZNF394), found in Pan paniscus (Pygmy chimpanzee).